Here is a 216-residue protein sequence, read N- to C-terminus: UPF0548 protein (216 aa).

The protein belongs to the UPF0548 family.

The polypeptide is UPF0548 protein (Dictyostelium discoideum (Social amoeba)).